Here is a 258-residue protein sequence, read N- to C-terminus: Imidazole glycerol phosphate synthase subunit HisF (258 aa).

Catalysis depends on residues Asp12 and Asp131.

This sequence belongs to the HisA/HisF family. In terms of assembly, heterodimer of HisH and HisF.

The protein localises to the cytoplasm. It carries out the reaction 5-[(5-phospho-1-deoxy-D-ribulos-1-ylimino)methylamino]-1-(5-phospho-beta-D-ribosyl)imidazole-4-carboxamide + L-glutamine = D-erythro-1-(imidazol-4-yl)glycerol 3-phosphate + 5-amino-1-(5-phospho-beta-D-ribosyl)imidazole-4-carboxamide + L-glutamate + H(+). The protein operates within amino-acid biosynthesis; L-histidine biosynthesis; L-histidine from 5-phospho-alpha-D-ribose 1-diphosphate: step 5/9. In terms of biological role, IGPS catalyzes the conversion of PRFAR and glutamine to IGP, AICAR and glutamate. The HisF subunit catalyzes the cyclization activity that produces IGP and AICAR from PRFAR using the ammonia provided by the HisH subunit. The chain is Imidazole glycerol phosphate synthase subunit HisF from Corynebacterium diphtheriae (strain ATCC 700971 / NCTC 13129 / Biotype gravis).